Here is a 1167-residue protein sequence, read N- to C-terminus: Melanoma receptor tyrosine-protein kinase (1167 aa).

Residues 1–25 (MEFLRGGAALLQLLLVLSISRCCST) form the signal peptide. The Extracellular segment spans residues 26–642 (DPDRKVCQGT…GCRGDIVSHS (617 aa)). N-linked (GlcNAc...) asparagine glycosylation is found at Asn114, Asn144, and Asn201. 11 disulfide bridges follow: Cys195-Cys204, Cys199-Cys212, Cys220-Cys228, Cys224-Cys236, Cys237-Cys245, Cys241-Cys253, Cys256-Cys265, Cys269-Cys296, Cys300-Cys311, Cys315-Cys330, and Cys333-Cys337. Asn356, Asn365, Asn398, Asn417, and Asn501 each carry an N-linked (GlcNAc...) asparagine glycan. 9 disulfides stabilise this stretch: Cys504–Cys513, Cys508–Cys521, Cys524–Cys533, Cys537–Cys553, Cys556–Cys569, Cys560–Cys577, Cys593–Cys615, Cys618–Cys626, and Cys622–Cys634. A glycan (N-linked (GlcNAc...) asparagine) is linked at Asn576. Residue Asn621 is glycosylated (N-linked (GlcNAc...) asparagine). A helical transmembrane segment spans residues 643–665 (SLAVGLVSGLLITVIVALLIVVL). Residues 666–1167 (LRRRRIKRKR…QGGALYTPVR (502 aa)) are Cytoplasmic-facing. The 268-residue stretch at 710 to 977 (FKKDRVLGSG…QMARDPSRYL (268 aa)) folds into the Protein kinase domain. ATP contacts are provided by residues 716–724 (LGSGAFGTV) and Lys743. Asp835 serves as the catalytic Proton acceptor.

The protein belongs to the protein kinase superfamily. Tyr protein kinase family. EGF receptor subfamily.

It is found in the membrane. It catalyses the reaction L-tyrosyl-[protein] + ATP = O-phospho-L-tyrosyl-[protein] + ADP + H(+). Probable receptor with tyrosine-protein kinase activity. The polypeptide is Melanoma receptor tyrosine-protein kinase (xmrk) (Xiphophorus maculatus (Southern platyfish)).